The sequence spans 84 residues: Translation initiation factor IF-1, chloroplastic (84 aa).

In terms of domain architecture, S1-like spans 1-72 (MKKQNLVEME…SKGRITYRLR (72 aa)).

This sequence belongs to the IF-1 family. As to quaternary structure, component of the 30S ribosomal translation pre-initiation complex which assembles on the 30S ribosome in the order IF-2 and IF-3, IF-1 and N-formylmethionyl-tRNA(fMet); mRNA recruitment can occur at any time during PIC assembly.

It localises to the plastid. The protein resides in the chloroplast. In terms of biological role, one of the essential components for the initiation of protein synthesis. Stabilizes the binding of IF-2 and IF-3 on the 30S subunit to which N-formylmethionyl-tRNA(fMet) subsequently binds. Helps modulate mRNA selection, yielding the 30S pre-initiation complex (PIC). Upon addition of the 50S ribosomal subunit IF-1, IF-2 and IF-3 are released leaving the mature 70S translation initiation complex. The polypeptide is Translation initiation factor IF-1, chloroplastic (Spirogyra maxima (Green alga)).